The chain runs to 176 residues: RNA pyrophosphohydrolase (176 aa).

Residues 6–149 (GYRPNVGIVI…KRDVYRRVMK (144 aa)) form the Nudix hydrolase domain. The short motif at 38–59 (GGINPGESAEQAMYRELFEEVG) is the Nudix box element.

The protein belongs to the Nudix hydrolase family. RppH subfamily. The cofactor is a divalent metal cation.

Its function is as follows. Accelerates the degradation of transcripts by removing pyrophosphate from the 5'-end of triphosphorylated RNA, leading to a more labile monophosphorylated state that can stimulate subsequent ribonuclease cleavage. The polypeptide is RNA pyrophosphohydrolase (Salmonella arizonae (strain ATCC BAA-731 / CDC346-86 / RSK2980)).